Here is a 931-residue protein sequence, read N- to C-terminus: Dipeptidyl aminopeptidase A (931 aa).

A compositionally biased stretch (basic residues) spans 1–13 (MSASTHSHKRKNS). The tract at residues 1–58 (MSASTHSHKRKNSHLFPQRKSSNSSMDKPFFPNNDSVANTDPQSNENGHTINEIRPTE) is disordered. Over 1–119 (MSASTHSHKR…GEWSLPEKRS (119 aa)) the chain is Cytoplasmic. The span at 33-50 (NNDSVANTDPQSNENGHT) shows a compositional bias: polar residues. Residues 120-140 (YVLVFTLIALSVLVLLVILIP) traverse the membrane as a helical; Signal-anchor for type II membrane protein segment. Residues 141 to 931 (SKLLPTKITR…RFDNTEVLHL (791 aa)) are Lumenal-facing. A glycan (N-linked (GlcNAc...) asparagine) is linked at N377. S785 serves as the catalytic Charge relay system. N-linked (GlcNAc...) asparagine glycosylation occurs at N814. Catalysis depends on charge relay system residues D863 and H896.

It belongs to the peptidase S9B family.

It localises to the vacuole membrane. Its function is as follows. Responsible for the proteolytic maturation of the alpha-factor precursor. The sequence is that of Dipeptidyl aminopeptidase A (STE13) from Saccharomyces cerevisiae (strain ATCC 204508 / S288c) (Baker's yeast).